The following is a 484-amino-acid chain: Coronin-1B (484 aa).

Serine 2 bears the Phosphoserine mark. WD repeat units follow at residues 80–120 (GHTG…LTSP), 130–170 (GHTK…ELYR), 174–213 (LHPD…LVAE), 217–260 (AHEG…EPMA), and 265–305 (DSSN…PYIH). A coiled-coil region spans residues 447–481 (KLEEVMHGLRALRVLVKEQGERISRLEEHLGRMEN).

It belongs to the WD repeat coronin family. Forms homooligomers, but does not form complexes with the other coronins. Interacts with Arp2/3 complex components, including ACTR2, ARPC1B and ARPC2. Binds actin. Phosphorylation on Ser-2 regulates the interaction with the Arp2/3 complex and cell motility in fibroblasts. Phosphorylation does not seem to affect subcellular location.

It is found in the cytoplasm. It localises to the cytoskeleton. Its subcellular location is the stress fiber. Regulates leading edge dynamics and cell motility in fibroblasts. May be involved in cytokinesis and signal transduction. The protein is Coronin-1B (Coro1b) of Rattus norvegicus (Rat).